Consider the following 161-residue polypeptide: FSKKRIESVEVTKIHYDQIVKVKIQLAEEELELAGLIDSGNQLYDPLTKTPVMIMHVSSLEHCLPSWLTEQIYSKTEIPQIPENDSGWATKLRLIPFRAVGVESQFLWAIKPDSVQVDHEGSSIVVNKVLIGLNTQQLSTNGEYQCIVHPKMLISQKMVIA.

Residue Asp38 is part of the active site.

Belongs to the peptidase U4 family.

Probably activates the RNA polymerase sigma-35 factor at the stage II of sporulation. The sequence is that of Putative sporulation sigma factor-processing peptidase from Bacillus thuringiensis subsp. kurstaki.